Here is a 326-residue protein sequence, read N- to C-terminus: Nucleoporin Nup37 (326 aa).

4 WD repeats span residues 70–117, 122–162, 164–203, and 294–325; these read HHGV…KNEY, GHSD…TAHF, LHSPGMSVCWHPEETFKLMVAEKNGTIRFYDLMAQQAILS, and GSVAVGSGLSWHRTLPLCAVGGDHKLLFWVTE.

In terms of assembly, component of the Nup107-160 subcomplex of the nuclear pore complex (NPC). The Nup107-160 subcomplex includes NUP160, NUP133, NUP107, NUP98, NUP85, NUP43, NUP37, SEH1 and SEC13.

The protein resides in the chromosome. It localises to the centromere. The protein localises to the kinetochore. Its subcellular location is the nucleus. It is found in the nuclear pore complex. In terms of biological role, component of the Nup107-160 subcomplex of the nuclear pore complex (NPC). The Nup107-160 subcomplex is required for the assembly of a functional NPC. The Nup107-160 subcomplex is also required for normal kinetochore microtubule attachment, mitotic progression and chromosome segregation. This is Nucleoporin Nup37 (Nup37) from Mus musculus (Mouse).